Consider the following 261-residue polypeptide: Prostatic glandular kallikrein-6 (261 aa).

An N-terminal signal peptide occupies residues 1–18 (MWLLILFLILSLGWNDAA). A propeptide spans 19 to 24 (PPGQSR) (activation peptide). In terms of domain architecture, Peptidase S1 spans 25–258 (IIGGFNCEKN…FTSWMKKVMK (234 aa)). 5 disulfides stabilise this stretch: C31–C173, C50–C66, C152–C219, C184–C198, and C209–C234. H65 serves as the catalytic Charge relay system. Residue N108 is glycosylated (N-linked (GlcNAc...) asparagine). Catalysis depends on D120, which acts as the Charge relay system. S213 functions as the Charge relay system in the catalytic mechanism.

This sequence belongs to the peptidase S1 family. Kallikrein subfamily.

The enzyme catalyses Preferential cleavage of Arg-|-Xaa bonds in small molecule substrates. Highly selective action to release kallidin (lysyl-bradykinin) from kininogen involves hydrolysis of Met-|-Xaa or Leu-|-Xaa.. Glandular kallikreins cleave Met-Lys and Arg-Ser bonds in kininogen to release Lys-bradykinin. The chain is Prostatic glandular kallikrein-6 (Klk6) from Rattus norvegicus (Rat).